The sequence spans 217 residues: GRB2-related adapter protein (217 aa).

In terms of domain architecture, SH3 1 spans 1–58; that stretch reads MESVALYSFQATESDELAFNKGDTLKILNMEDDQNWYKAELRGVEGFIPKNYIRVKPH. The 95-residue stretch at 60-154 folds into the SH2 domain; the sequence is WYSGRISRQL…QIFLRDEEPL (95 aa). Positions 158–217 constitute an SH3 2 domain; it reads PGACFAQAQFDFSAQDPSQLSFRRGDIIEVLERPDPHWWRGRSCGRVGFFPRSYVQPVHL.

This sequence belongs to the GRB2/sem-5/DRK family. Associates through its SH2 domain with ligand-activated receptors for stem cell factor (KIT) and erythropoietin (EPOR). Also forms a stable complex with the Bcr-Abl oncoprotein. GRAP is associated with the Ras guanine nucleotide exchange factor SOS1, primarily through its N-terminal SH3 domain. Interacts with phosphorylated LAT upon TCR activation. Interacts with SHB.

Its subcellular location is the membrane. The protein resides in the synapse. Couples signals from receptor and cytoplasmic tyrosine kinases to the Ras signaling pathway. Plays a role in the inner ear and in hearing. The protein is GRB2-related adapter protein of Homo sapiens (Human).